A 475-amino-acid chain; its full sequence is MNFETVIGLEVHVELKTNSKIFSPAPAHFGAEPNTNTTVIDLGYPGVLPVLNKNVVDFAMRAALALNMEIEQETKFDRKNYFYPDNPKAYQISQFDKPIGKNGWIDIEVDGYTKRIGITRLHMEEDAGKLSHAGDHSLVDFNRQGTPLVEIVSEPDIRTPNEAYAYLEKLKSIIQYTDVSDCKMEEGSLRCDANISIRPYGQEEFGTKTELKNLNSFNYVRRGLEHEELRQADVLLSGGVIEQETRRFDEKTGKTILMRVKEGTDDYRYFPEPDLVRLSIDDAWLERVKSEIPELPDARKKRYVEELGLTPYDAGVLVISKEISDFFESMIVNGADAKLSANWLMGDVSAYLNAEQKDLKDTALTPENLAEMVKLITDGTISSKIGKKVFAELVENGGSAQEIVKAKGLVQISDEGALLAIVTEVLDNNAQSIEDFKNGKDRAIGFLVGQIMKATKGQANPPMVNKLLQQEIAKR.

Belongs to the GatB/GatE family. GatB subfamily. In terms of assembly, heterotrimer of A, B and C subunits.

The catalysed reaction is L-glutamyl-tRNA(Gln) + L-glutamine + ATP + H2O = L-glutaminyl-tRNA(Gln) + L-glutamate + ADP + phosphate + H(+). It carries out the reaction L-aspartyl-tRNA(Asn) + L-glutamine + ATP + H2O = L-asparaginyl-tRNA(Asn) + L-glutamate + ADP + phosphate + 2 H(+). Functionally, allows the formation of correctly charged Asn-tRNA(Asn) or Gln-tRNA(Gln) through the transamidation of misacylated Asp-tRNA(Asn) or Glu-tRNA(Gln) in organisms which lack either or both of asparaginyl-tRNA or glutaminyl-tRNA synthetases. The reaction takes place in the presence of glutamine and ATP through an activated phospho-Asp-tRNA(Asn) or phospho-Glu-tRNA(Gln). In Lysinibacillus sphaericus (strain C3-41), this protein is Aspartyl/glutamyl-tRNA(Asn/Gln) amidotransferase subunit B.